Consider the following 324-residue polypeptide: Quinolinate synthase 1 (324 aa).

His48 and Ser66 together coordinate iminosuccinate. Cys111 contacts [4Fe-4S] cluster. Iminosuccinate contacts are provided by residues 137–139 (YVN) and Ser154. Cys196 contacts [4Fe-4S] cluster. Iminosuccinate contacts are provided by residues 222 to 224 (HPE) and Thr239. Residue Cys282 participates in [4Fe-4S] cluster binding.

It belongs to the quinolinate synthase family. Type 2 subfamily. Requires [4Fe-4S] cluster as cofactor.

The protein localises to the cytoplasm. It carries out the reaction iminosuccinate + dihydroxyacetone phosphate = quinolinate + phosphate + 2 H2O + H(+). It functions in the pathway cofactor biosynthesis; NAD(+) biosynthesis; quinolinate from iminoaspartate: step 1/1. Catalyzes the condensation of iminoaspartate with dihydroxyacetone phosphate to form quinolinate. The chain is Quinolinate synthase 1 from Mesorhizobium japonicum (strain LMG 29417 / CECT 9101 / MAFF 303099) (Mesorhizobium loti (strain MAFF 303099)).